Here is a 462-residue protein sequence, read N- to C-terminus: Chromosomal replication initiator protein DnaA (462 aa).

The interval 1-83 is domain I, interacts with DnaA modulators; sequence MSLSLWQQCL…LRFEVGSKPA (83 aa). The segment at 83 to 125 is domain II; the sequence is AARAHNNPVTASVSAPVAPVTRSAPMRPSWDNSPAQPELSYRS. The tract at residues 104 to 125 is disordered; that stretch reads RSAPMRPSWDNSPAQPELSYRS. Positions 112–125 are enriched in polar residues; the sequence is WDNSPAQPELSYRS. The interval 126–342 is domain III, AAA+ region; it reads NVNPKHTFDN…GALNRVIANA (217 aa). Residues glycine 170, glycine 172, lysine 173, and threonine 174 each contribute to the ATP site. Residues 343–462 are domain IV, binds dsDNA; that stretch reads NFTGRAITID…FSNLIRTLSS (120 aa).

This sequence belongs to the DnaA family. In terms of assembly, oligomerizes as a right-handed, spiral filament on DNA at oriC.

It is found in the cytoplasm. Functionally, plays an essential role in the initiation and regulation of chromosomal replication. ATP-DnaA binds to the origin of replication (oriC) to initiate formation of the DNA replication initiation complex once per cell cycle. Binds the DnaA box (a 9 base pair repeat at the origin) and separates the double-stranded (ds)DNA. Forms a right-handed helical filament on oriC DNA; dsDNA binds to the exterior of the filament while single-stranded (ss)DNA is stabiized in the filament's interior. The ATP-DnaA-oriC complex binds and stabilizes one strand of the AT-rich DNA unwinding element (DUE), permitting loading of DNA polymerase. After initiation quickly degrades to an ADP-DnaA complex that is not apt for DNA replication. Binds acidic phospholipids. This chain is Chromosomal replication initiator protein DnaA, found in Yersinia pseudotuberculosis serotype O:1b (strain IP 31758).